A 67-amino-acid polypeptide reads, in one-letter code: Large ribosomal subunit protein bL35 (67 aa).

The span at Met1–Val16 shows a compositional bias: basic residues. The interval Met1–Arg24 is disordered.

It belongs to the bacterial ribosomal protein bL35 family.

The chain is Large ribosomal subunit protein bL35 from Verminephrobacter eiseniae (strain EF01-2).